The sequence spans 189 residues: Adenylate kinase (189 aa).

Residue 10 to 15 (AAGKGT) participates in ATP binding. An NMP region spans residues 30–59 (STGDMLRAARASGSELGQRVAKIMDEGGLV). AMP is bound by residues Thr-31, Arg-36, 57–59 (GLV), 85–88 (GFPR), and Gln-92. The interval 126 to 136 (KRFEEQGRADD) is LID. Arg-127 is a binding site for ATP. Arg-133 and Arg-144 together coordinate AMP. ATP is bound at residue Gly-172.

Belongs to the adenylate kinase family. Monomer.

It localises to the cytoplasm. It catalyses the reaction AMP + ATP = 2 ADP. The protein operates within purine metabolism; AMP biosynthesis via salvage pathway; AMP from ADP: step 1/1. Its function is as follows. Catalyzes the reversible transfer of the terminal phosphate group between ATP and AMP. Plays an important role in cellular energy homeostasis and in adenine nucleotide metabolism. The chain is Adenylate kinase from Hyphomonas neptunium (strain ATCC 15444).